Consider the following 215-residue polypeptide: Guanylate kinase (215 aa).

The region spanning 6-185 is the Guanylate kinase-like domain; sequence GAILVLSGPS…SEKLLLSIAR (180 aa). 13–20 contacts ATP; sequence GPSGSGKS.

The protein belongs to the guanylate kinase family.

It localises to the cytoplasm. It catalyses the reaction GMP + ATP = GDP + ADP. Functionally, essential for recycling GMP and indirectly, cGMP. This is Guanylate kinase from Wolinella succinogenes (strain ATCC 29543 / DSM 1740 / CCUG 13145 / JCM 31913 / LMG 7466 / NCTC 11488 / FDC 602W) (Vibrio succinogenes).